Here is a 485-residue protein sequence, read N- to C-terminus: MKRSFLSLAVAAVVLSGCSLIPDYQRPEAPVAAAYPQGQAYGQNTGAAAVPAADIGWREFFRDPQLQQLIGVALENNRDLRVAALNVEAFRAQYRIQRADLFPRIGVDGSGTRQRLPGDLSTTGSPAISSQYGVTLGTTAWELDLFGRLRSLRDQALEQYLATEQAQRSAQTTLVASVATAYLTLKADQAQLQLTKDTLGTYQKSFDLTQRSYDVGVASALDLRQAQTAVEGARATLAQYTRLVAQDQNALVLLLGSGIPANLPQGLGLDQTLLTEVPAGLPSDLLQRRPDILEAEHQLMAANASIGAARAAFFPSISLTANAGTMSRQLSGLFDAGSGSWLFQPSINLPIFTAGSLRASLDYAKIQKDINVAQYEKAIQTAFQEVADGLAARGTFTEQLQAQRDLVKASDEYYQLADKRYRTGVDNYLTLLDAQRSLFTAQQQLITDRLNQLTSEVNLYKALGGGWNQQTVTQQQTAKKEDPQA.

Residues 1–17 (MKRSFLSLAVAAVVLSG) form the signal peptide. Cysteine 18 is lipidated: N-palmitoyl cysteine. Residue cysteine 18 is the site of S-diacylglycerol cysteine attachment.

The protein belongs to the outer membrane factor (OMF) (TC 1.B.17) family. As to quaternary structure, component of the MexAB-OprM multidrug efflux complex, composed of six MexA subunits forming a hexameric tube, binding to a MexB trimer, which interact with the trimeric OprM outer membrane channel protein. The OprM homotrimer forms a 135 Angstroms-long pore. It consists of a beta-barrel, which is probably inserted in the outer membrane, and an alpha-barrel formed by alpha-helices which probably spans the periplasm. In the ground state the periplasmic end is closed, while the outer membrane end opening is 6-8 Angstroms in diameter. OprM does not directly contact MexB; instead, MexA joins MexB and OprM by forming a funnel-like hexamer anchored to the inner membrane. MexA may initially form a hexameric ring complex with MexB prior to OprM, then OprM undergoes a conformational change as it contacts MexA, allowing the periplasmic gate to open. It is thought that, under high intracellular substrate concentration, MexB ejects substrate into the tunnel formed by MexA-OprM; as the substrate level declines, conformational changes in MexB cause efflux to reduce and stop and the complex shifts to the closed state. MexB subunit acts as a substrate:proton antiporter and activity is enhanced significantly when in complex with MexA and OprM, in vitro.

The protein resides in the cell outer membrane. Export of antibiotics and solvents is dramatically decreased in the presence of the protonophore carbonyl cyanide m-chlorophenylhydrazone (CCCP), therefore may be driven by a proton gradient. Antibiotic efflux is inhibited by pyridopyrimidine derivatives, such as ABI-PP, acting by binding to a hydrophobic pocket in MexB. In terms of biological role, the outer membrane component of the MexAB-OprM efflux system that confers multidrug resistance. Functions as the major efflux pump for n-hexane and p-xylene efflux. Has been shown in one study to be involved in the active efflux of the autoinducer N-(3-oxododecanoyl) homoserine lactone, thereby playing an indirect role in quorum-sensing; but has been shown in another study not to be involved in efflux of this autoinducer. Over-expression of the pump increases antibiotic and solvent efflux capacities. Can replace the OprJ outer membrane component of the MexCD-OprJ pump; the antibiotics exported are those exported by the intact MexCD pump, showing that efflux substrate specificity is not conferred by this component. Serves as the outer membrane component for the MexXY efflux system. Implicated in the secretion of the siderophore pyoverdine. OprM is probably involved in the efflux of the siderophore across the outer membrane. The chain is Outer membrane protein OprM (oprM) from Pseudomonas aeruginosa (strain ATCC 15692 / DSM 22644 / CIP 104116 / JCM 14847 / LMG 12228 / 1C / PRS 101 / PAO1).